We begin with the raw amino-acid sequence, 399 residues long: Zinc finger TRAF-type-containing protein 1 (399 aa).

A compositionally biased stretch (gly residues) spans 1 to 13 (MSGAEEAGGGGPA). The segment at 1–21 (MSGAEEAGGGGPAAGPAGAVP) is disordered. The segment at 106 to 151 (CTVCLDLPKASVYQCTNGHLMCAGCFIHLLADARLKEEQATCPNCR) adopts an RING-type; degenerate zinc-finger fold. The TRAF-type zinc-finger motif lies at 152-210 (CEISKSLCCRNLAVEKAVSELPSECGFCLRQFPRSLLERHQKEECQDRVTQCKYKRIGC).

The protein belongs to the ZFTRAF1 family. Interacts with LGALS3. Expressed in heart, brain, liver, testis and kidney.

It localises to the cytoplasm. It is found in the perinuclear region. In Mus musculus (Mouse), this protein is Zinc finger TRAF-type-containing protein 1.